Reading from the N-terminus, the 206-residue chain is Synaptosomal-associated protein 25 (206 aa).

The segment covering 1–20 (MAEDADMRNELEEMQRRADQ) has biased composition (basic and acidic residues). The disordered stretch occupies residues 1 to 23 (MAEDADMRNELEEMQRRADQLAD). Residues 19–81 (DQLADESLES…KEAEKNLTDL (63 aa)) form the t-SNARE coiled-coil homology 1 domain. S-palmitoyl cysteine attachment occurs at residues cysteine 85, cysteine 88, cysteine 90, and cysteine 92. Threonine 138 carries the phosphothreonine modification. One can recognise a t-SNARE coiled-coil homology 2 domain in the interval 140-202 (DARENEMDEN…DEANQRATKM (63 aa)). Phosphoserine is present on serine 187.

This sequence belongs to the SNAP-25 family. Part of the SNARE core complex containing SNAP25, VAMP2 and STX1A. This complex binds CPLX1. Interacts with TRIM9, RIMS1 and SNAPIN. Binds STXBP6. Found in a ternary complex with STX1A and VAMP8. Associates with the BLOC-1 complex. Isoform 1 and isoform 2 interact with BLOC1S6. Interacts with alpha-synuclein/SNCA. Post-translationally, palmitoylated. Cys-85 appears to be the main site, and palmitoylation is required for membrane association.

The protein resides in the membrane. It is found in the synapse. Its subcellular location is the synaptosome. It localises to the cell membrane. T-SNARE involved in the molecular regulation of neurotransmitter release. May play an important role in the synaptic function of specific neuronal systems. Associates with proteins involved in vesicle docking and membrane fusion. The sequence is that of Synaptosomal-associated protein 25 (SNAP25) from Gallus gallus (Chicken).